The sequence spans 137 residues: RQILLTRKNFGCGSSREHAPWALDDYGFRAIIAPSFADIFFNNCYKNGLLPIVLTEEQVDRLFKEVEANEGYRLSIDLAEQTLTTPSGETFTFDITEHRKHCLLNGLDEIGLTLQHADEIHAFEEKRRQSQPWLFNG.

This sequence belongs to the LeuD family. LeuD type 1 subfamily. As to quaternary structure, heterodimer of LeuC and LeuD.

It catalyses the reaction (2R,3S)-3-isopropylmalate = (2S)-2-isopropylmalate. The protein operates within amino-acid biosynthesis; L-leucine biosynthesis; L-leucine from 3-methyl-2-oxobutanoate: step 2/4. Functionally, catalyzes the isomerization between 2-isopropylmalate and 3-isopropylmalate, via the formation of 2-isopropylmaleate. The chain is 3-isopropylmalate dehydratase small subunit (leuD) from Neisseria lactamica.